The following is a 135-amino-acid chain: ATP synthase epsilon chain (135 aa).

Belongs to the ATPase epsilon chain family. F-type ATPases have 2 components, CF(1) - the catalytic core - and CF(0) - the membrane proton channel. CF(1) has five subunits: alpha(3), beta(3), gamma(1), delta(1), epsilon(1). CF(0) has three main subunits: a, b and c.

The protein localises to the cell inner membrane. Its function is as follows. Produces ATP from ADP in the presence of a proton gradient across the membrane. This Brucella anthropi (strain ATCC 49188 / DSM 6882 / CCUG 24695 / JCM 21032 / LMG 3331 / NBRC 15819 / NCTC 12168 / Alc 37) (Ochrobactrum anthropi) protein is ATP synthase epsilon chain.